A 507-amino-acid chain; its full sequence is ATP synthase subunit alpha, mitochondrial (507 aa).

ATP is bound at residue 171–178 (GDRQTGKT).

This sequence belongs to the ATPase alpha/beta chains family. In terms of assembly, F-type ATPases have 2 components, CF(1) - the catalytic core - and CF(0) - the membrane proton channel. CF(1) has five subunits: alpha(3), beta(3), gamma(1), delta(1), epsilon(1). CF(0) has three main subunits: a, b and c.

Its subcellular location is the mitochondrion. It is found in the mitochondrion inner membrane. Mitochondrial membrane ATP synthase (F(1)F(0) ATP synthase or Complex V) produces ATP from ADP in the presence of a proton gradient across the membrane which is generated by electron transport complexes of the respiratory chain. F-type ATPases consist of two structural domains, F(1) - containing the extramembraneous catalytic core, and F(0) - containing the membrane proton channel, linked together by a central stalk and a peripheral stalk. During catalysis, ATP synthesis in the catalytic domain of F(1) is coupled via a rotary mechanism of the central stalk subunits to proton translocation. Subunits alpha and beta form the catalytic core in F(1). Rotation of the central stalk against the surrounding alpha(3)beta(3) subunits leads to hydrolysis of ATP in three separate catalytic sites on the beta subunits. Subunit alpha does not bear the catalytic high-affinity ATP-binding sites. This is ATP synthase subunit alpha, mitochondrial (ATPA) from Arabidopsis thaliana (Mouse-ear cress).